The chain runs to 199 residues: Interleukin-11 (199 aa).

The signal sequence occupies residues 1–21 (MNCVCRLVLVVLSLWPDTAVA). An important for interaction with IL11RA and for the stimulation of cell proliferation region spans residues 182–190 (HLTLDWAVR).

This sequence belongs to the IL-6 superfamily. As to quaternary structure, interacts with IL11RA to associate with IL6ST, giving rise to a multimeric signaling complex.

It is found in the secreted. Cytokine that stimulates the proliferation of hematopoietic stem cells and megakaryocyte progenitor cells and induces megakaryocyte maturation resulting in increased platelet production. Also promotes the proliferation of hepatocytes in response to liver damage. Binding to its receptor formed by IL6ST and IL11RA activates a signaling cascade that promotes cell proliferation. Signaling leads to the activation of intracellular protein kinases and the phosphorylation of STAT3. The interaction with the membrane-bound IL11RA and IL6ST stimulates 'classic signaling', whereas the binding of IL11 and soluble IL11RA to IL6ST stimulates 'trans-signaling'. In Macaca fascicularis (Crab-eating macaque), this protein is Interleukin-11 (IL11).